A 449-amino-acid chain; its full sequence is Biotin carboxylase (449 aa).

Residues 1–445 enclose the Biotin carboxylation domain; sequence MLDKIVIANR…NIHYLEKKLG (445 aa). ATP contacts are provided by residues Lys-116, Lys-159, 165–166, 201–204, His-209, and His-236; these read GG and EKYL. The ATP-grasp domain maps to 120 to 317; it reads IAAMKKAGVP…LIKEQLRIAA (198 aa). A hydrogencarbonate-binding site is contributed by Lys-238. ATP-binding residues include Glu-276 and Glu-288. The Mg(2+) site is built by Glu-276, Glu-288, and Asn-290. 3 residues coordinate Mn(2+): Glu-276, Glu-288, and Asn-290. Hydrogencarbonate is bound by residues Arg-292, Val-295, and Arg-338. Arg-292 is a catalytic residue. Arg-338 contacts biotin.

Acetyl-CoA carboxylase is a heterohexamer of biotin carboxyl carrier protein, biotin carboxylase and the two subunits of carboxyl transferase in a 2:2 complex. It depends on Mg(2+) as a cofactor. Mn(2+) is required as a cofactor.

The catalysed reaction is N(6)-biotinyl-L-lysyl-[protein] + hydrogencarbonate + ATP = N(6)-carboxybiotinyl-L-lysyl-[protein] + ADP + phosphate + H(+). The protein operates within lipid metabolism; malonyl-CoA biosynthesis; malonyl-CoA from acetyl-CoA: step 1/1. This protein is a component of the acetyl coenzyme A carboxylase complex; first, biotin carboxylase catalyzes the carboxylation of the carrier protein and then the transcarboxylase transfers the carboxyl group to form malonyl-CoA. The polypeptide is Biotin carboxylase (accC) (Escherichia coli O157:H7).